The primary structure comprises 571 residues: Proline--tRNA ligase (571 aa).

It belongs to the class-II aminoacyl-tRNA synthetase family. ProS type 1 subfamily. In terms of assembly, homodimer.

Its subcellular location is the cytoplasm. It carries out the reaction tRNA(Pro) + L-proline + ATP = L-prolyl-tRNA(Pro) + AMP + diphosphate. In terms of biological role, catalyzes the attachment of proline to tRNA(Pro) in a two-step reaction: proline is first activated by ATP to form Pro-AMP and then transferred to the acceptor end of tRNA(Pro). As ProRS can inadvertently accommodate and process non-cognate amino acids such as alanine and cysteine, to avoid such errors it has two additional distinct editing activities against alanine. One activity is designated as 'pretransfer' editing and involves the tRNA(Pro)-independent hydrolysis of activated Ala-AMP. The other activity is designated 'posttransfer' editing and involves deacylation of mischarged Ala-tRNA(Pro). The misacylated Cys-tRNA(Pro) is not edited by ProRS. This Ectopseudomonas mendocina (strain ymp) (Pseudomonas mendocina) protein is Proline--tRNA ligase.